The following is a 23-amino-acid chain: Potassium channel toxin alpha-KTx 13.1 (23 aa).

3 disulfide bridges follow: C2–C15, C5–C20, and C9–C22. The tract at residues 13 to 20 (GKCINGRC) is interaction with Ca(2+)-activated K(+) channels.

In terms of tissue distribution, expressed by the venom gland.

The protein localises to the secreted. Blocks reversibly Shaker B potassium channels. Also displaces binding of noxiustoxin to mouse brain synaptosome membranes. The protein is Potassium channel toxin alpha-KTx 13.1 of Tityus obscurus (Amazonian scorpion).